A 367-amino-acid polypeptide reads, in one-letter code: Peptide chain release factor 2 (367 aa).

The residue at position 254 (glutamine 254) is an N5-methylglutamine.

Belongs to the prokaryotic/mitochondrial release factor family. Post-translationally, methylated by PrmC. Methylation increases the termination efficiency of RF2.

The protein resides in the cytoplasm. Peptide chain release factor 2 directs the termination of translation in response to the peptide chain termination codons UGA and UAA. The polypeptide is Peptide chain release factor 2 (Neisseria gonorrhoeae (strain ATCC 700825 / FA 1090)).